Here is a 511-residue protein sequence, read N- to C-terminus: GMP synthase [glutamine-hydrolyzing] (511 aa).

A Glutamine amidotransferase type-1 domain is found at 5 to 195 (DILVLDFGSQ…AKYACNCESI (191 aa)). Cys-82 serves as the catalytic Nucleophile. Active-site residues include His-169 and Glu-171. Residues 196 to 386 (WNMGSFAKTQ…LGLSKEVVYR (191 aa)) form the GMPS ATP-PPase domain. 223–229 (SGGVDSS) contributes to the ATP binding site.

As to quaternary structure, homodimer.

The enzyme catalyses XMP + L-glutamine + ATP + H2O = GMP + L-glutamate + AMP + diphosphate + 2 H(+). Its pathway is purine metabolism; GMP biosynthesis; GMP from XMP (L-Gln route): step 1/1. Its function is as follows. Catalyzes the synthesis of GMP from XMP. The chain is GMP synthase [glutamine-hydrolyzing] (guaA) from Campylobacter jejuni subsp. jejuni serotype O:2 (strain ATCC 700819 / NCTC 11168).